Reading from the N-terminus, the 943-residue chain is Translation initiation factor IF-2 (943 aa).

The segment at 30–357 (SVKSHSSSVE…KPVTERKFHE (328 aa)) is disordered. 5 stretches are compositionally biased toward basic and acidic residues: residues 69–82 (PKEEKVEPKVDKAS), 112–137 (FKAEREARAKAEAERRKNGGGRDNRN), 145–155 (QGKRHNNDRRN), 163–196 (DHNKGNRDNSTNHDRNFQGKLRNDQNQNNRRDNA), and 224–253 (RQSETRFREEKAAEQRRAKEQEKARKEKQQ). Over residues 254-266 (VKVAVQKAAAETK) the composition is skewed to low complexity. Basic and acidic residues predominate over residues 296 to 309 (KSRDNRRVNEDGPK). Positions 313 to 332 (NNKWNNQNQVRNQRNSNWNK) are enriched in low complexity. The region spanning 445–614 (ERAPVVTIMG…LLVAEVEELK (170 aa)) is the tr-type G domain. The interval 454 to 461 (GHVDHGKT) is G1. 454-461 (GHVDHGKT) lines the GTP pocket. The segment at 479-483 (GITQH) is G2. Positions 500–503 (DTPG) are G3. Residues 500-504 (DTPGH) and 554-557 (NKID) contribute to the GTP site. Residues 554-557 (NKID) are G4. The segment at 590–592 (SAK) is G5.

The protein belongs to the TRAFAC class translation factor GTPase superfamily. Classic translation factor GTPase family. IF-2 subfamily.

It localises to the cytoplasm. One of the essential components for the initiation of protein synthesis. Protects formylmethionyl-tRNA from spontaneous hydrolysis and promotes its binding to the 30S ribosomal subunits. Also involved in the hydrolysis of GTP during the formation of the 70S ribosomal complex. The protein is Translation initiation factor IF-2 of Streptococcus thermophilus (strain ATCC BAA-250 / LMG 18311).